Reading from the N-terminus, the 263-residue chain is Chymotrypsinogen B (263 aa).

The signal sequence occupies residues 1 to 18 (MAFLWLVSCFALVGATFG). Cystine bridges form between C19/C140, C60/C76, C154/C219, C186/C200, and C209/C238. Residues 34 to 261 (IVNGEDAIPG…LMPWVQEILE (228 aa)) form the Peptidase S1 domain. The active-site Charge relay system is H75. S93 carries the post-translational modification Phosphoserine. D120 (charge relay system) is an active-site residue. Catalysis depends on S213, which acts as the Charge relay system.

This sequence belongs to the peptidase S1 family.

It localises to the secreted. The protein resides in the extracellular space. The enzyme catalyses Preferential cleavage: Tyr-|-Xaa, Trp-|-Xaa, Phe-|-Xaa, Leu-|-Xaa.. This Mus musculus (Mouse) protein is Chymotrypsinogen B (Ctrb1).